A 769-amino-acid polypeptide reads, in one-letter code: Sensor protein DivL (769 aa).

Residues 6-26 form a helical membrane-spanning segment; sequence LILAAAAGAVCLAISVALWSH. The 212-residue stretch at 547-758 folds into the Histidine kinase domain; sequence NVSYELRTPL…TFTCHLPETQ (212 aa). Y550 carries the phosphotyrosine; by autocatalysis modification.

Autophosphorylated.

It is found in the cell membrane. The catalysed reaction is ATP + protein L-histidine = ADP + protein N-phospho-L-histidine.. In terms of biological role, required for cell division and growth. It catalyzes the phosphorylation of CtrA and activates transcription in vitro of the cell cycle-regulated fliF promoter. The polypeptide is Sensor protein DivL (divL) (Caulobacter vibrioides (strain ATCC 19089 / CIP 103742 / CB 15) (Caulobacter crescentus)).